The following is a 265-amino-acid chain: Orotidine 5'-phosphate decarboxylase (265 aa).

Residues Asp-37, 59–61, 91–100, Tyr-217, and Arg-236 each bind substrate; these read KTH and DRKFADIGNT. Catalysis depends on Lys-93, which acts as the Proton donor.

It belongs to the OMP decarboxylase family.

It catalyses the reaction orotidine 5'-phosphate + H(+) = UMP + CO2. It functions in the pathway pyrimidine metabolism; UMP biosynthesis via de novo pathway; UMP from orotate: step 2/2. This Saccharomycopsis fibuligera (Yeast) protein is Orotidine 5'-phosphate decarboxylase (URA3).